The chain runs to 664 residues: UvrABC system protein C (664 aa).

The region spanning 63-141 is the GIY-YIG domain; sequence LRPGVYRMYD…IKRYRPPYNI (79 aa). The region spanning 254–289 is the UVR domain; it reads THVQKKLVTAMEQASNDLNYELAAVYRDRLKALAFI.

This sequence belongs to the UvrC family. Interacts with UvrB in an incision complex.

The protein localises to the cytoplasm. Functionally, the UvrABC repair system catalyzes the recognition and processing of DNA lesions. UvrC both incises the 5' and 3' sides of the lesion. The N-terminal half is responsible for the 3' incision and the C-terminal half is responsible for the 5' incision. In Zymomonas mobilis subsp. mobilis (strain ATCC 31821 / ZM4 / CP4), this protein is UvrABC system protein C.